The sequence spans 430 residues: 3-deoxy-D-manno-octulosonic acid transferase (430 aa).

A helical; Signal-anchor membrane pass occupies residues 12–32 (AFLVAAFLAAAPRIFYKVVFH). The active-site Proton acceptor is glutamate 66. Residues 274–275 (PR), 314–316 (MGI), and 341–344 (NLLE) contribute to the CMP site.

This sequence belongs to the glycosyltransferase group 1 family. Glycosyltransferase 30 subfamily.

It localises to the cell inner membrane. It catalyses the reaction lipid IVA (E. coli) + CMP-3-deoxy-beta-D-manno-octulosonate = alpha-Kdo-(2-&gt;6)-lipid IVA (E. coli) + CMP + H(+). The catalysed reaction is alpha-Kdo-(2-&gt;6)-lipid IVA (E. coli) + CMP-3-deoxy-beta-D-manno-octulosonate = alpha-Kdo-(2-&gt;4)-alpha-Kdo-(2-&gt;6)-lipid IVA (E. coli) + CMP + H(+). It carries out the reaction alpha-Kdo-(2-&gt;4)-alpha-Kdo-(2-&gt;6)-lipid IVA (E. coli) + CMP-3-deoxy-beta-D-manno-octulosonate = alpha-Kdo-(2-&gt;8)-alpha-Kdo-(2-&gt;4)-alpha-Kdo-(2-&gt;6)-lipid IVA (E. coli) + CMP + H(+). Its pathway is bacterial outer membrane biogenesis; LPS core biosynthesis. Its function is as follows. Involved in lipopolysaccharide (LPS) biosynthesis. Catalyzes the transfer of three 3-deoxy-D-manno-octulosonate (Kdo) residues from CMP-Kdo to lipid IV(A), the tetraacyldisaccharide-1,4'-bisphosphate precursor of lipid A. Thus generates the genus-specific LPS epitope of Chlamydia, composed of the trisaccharide alpha-Kdo-(2-&gt;8)-alpha-Kdo-(2-&gt;4)-alpha-Kdo. This Chlamydia muridarum (strain MoPn / Nigg) protein is 3-deoxy-D-manno-octulosonic acid transferase (waaA).